Here is a 353-residue protein sequence, read N- to C-terminus: JmjC domain-containing protein E (353 aa).

Residues 138 to 348 (YYIQYQNNSL…ETTKYQKQIK (211 aa)) form the JmjC domain.

In Dictyostelium discoideum (Social amoeba), this protein is JmjC domain-containing protein E (jcdE).